A 435-amino-acid chain; its full sequence is AP-2 complex subunit mu (435 aa).

The MHD domain maps to 170 to 434; the sequence is RNELFLDVLE…IGRSGIYETR (265 aa). Positions 341, 345, and 354 each coordinate a 1,2-diacyl-sn-glycero-3-phospho-(1D-myo-inositol-3,4,5-trisphosphate).

Belongs to the adaptor complexes medium subunit family. As to quaternary structure, adaptor protein complex 2 (AP-2) is a heterotetramer composed of two large adaptins (alpha-type subunit and beta-type subunit), a medium adaptin (mu-type subunit) and a small adaptin (sigma-type subunit).

The protein resides in the cell membrane. Its subcellular location is the membrane. It is found in the coated pit. In terms of biological role, component of the adaptor complexes which link clathrin to receptors in coated vesicles. Clathrin-associated protein complexes are believed to interact with the cytoplasmic tails of membrane proteins, leading to their selection and concentration. AP50 is a subunit of the plasma membrane adaptor. The complex binds polyphosphoinositide-containing lipids. In Xenopus tropicalis (Western clawed frog), this protein is AP-2 complex subunit mu (ap2m1).